Consider the following 90-residue polypeptide: Probable Fe(2+)-trafficking protein (90 aa).

Belongs to the Fe(2+)-trafficking protein family. As to quaternary structure, monomer.

Functionally, could be a mediator in iron transactions between iron acquisition and iron-requiring processes, such as synthesis and/or repair of Fe-S clusters in biosynthetic enzymes. The chain is Probable Fe(2+)-trafficking protein from Serratia proteamaculans (strain 568).